A 452-amino-acid chain; its full sequence is tRNA modification GTPase MnmE (452 aa).

(6S)-5-formyl-5,6,7,8-tetrahydrofolate is bound by residues R22, E79, and K119. The TrmE-type G domain maps to 215–375 (GMKVVIAGRP…LRQHLKQSMG (161 aa)). A K(+)-binding site is contributed by N225. Residues 225–230 (NAGKSS), 244–250 (TDIAGTT), 269–272 (DTAG), and 333–336 (NKAD) contribute to the GTP site. S229 is a Mg(2+) binding site. K(+) is bound by residues T244, I246, and T249. T250 lines the Mg(2+) pocket. K452 is a (6S)-5-formyl-5,6,7,8-tetrahydrofolate binding site.

The protein belongs to the TRAFAC class TrmE-Era-EngA-EngB-Septin-like GTPase superfamily. TrmE GTPase family. As to quaternary structure, homodimer. Heterotetramer of two MnmE and two MnmG subunits. Requires K(+) as cofactor.

Its subcellular location is the cytoplasm. Exhibits a very high intrinsic GTPase hydrolysis rate. Involved in the addition of a carboxymethylaminomethyl (cmnm) group at the wobble position (U34) of certain tRNAs, forming tRNA-cmnm(5)s(2)U34. This chain is tRNA modification GTPase MnmE, found in Histophilus somni (strain 2336) (Haemophilus somnus).